A 128-amino-acid chain; its full sequence is Large ribosomal subunit protein bL12 (128 aa).

The protein belongs to the bacterial ribosomal protein bL12 family. Homodimer. Part of the ribosomal stalk of the 50S ribosomal subunit. Forms a multimeric L10(L12)X complex, where L10 forms an elongated spine to which 2 to 4 L12 dimers bind in a sequential fashion. Binds GTP-bound translation factors.

Its function is as follows. Forms part of the ribosomal stalk which helps the ribosome interact with GTP-bound translation factors. Is thus essential for accurate translation. The protein is Large ribosomal subunit protein bL12 of Sorangium cellulosum (strain So ce56) (Polyangium cellulosum (strain So ce56)).